The chain runs to 299 residues: MSGTFLVDEINYQKQQISISDPENCMVKRLLTFNTSGSPFSYGFSFYYTFLTCPNEVVIPVWSLMSIPCLSNSTSSFFATSNLTFSKLLPPSCQIVKGLYVPVDVIYKDVITEEKGFSTVPWLGNVLLEWSSPNCRGCEKESLRCGFKNKASLEVKYLADPPDETKSRLRPLIITLCIIGGITATCIAAIRIYNSERFVNQRRQNAAITARNTTQQPRGVVVTTGLDQSTIESYKKVELGESRRLPGTNGIICPICLSEYASKETVRCMPECDHCFHVQCIDEWLKIHSSCPVCRNSRS.

The helical transmembrane segment at 172 to 192 (LIITLCIIGGITATCIAAIRI) threads the bilayer. The segment at 253–295 (CPICLSEYASKETVRCMPECDHCFHVQCIDEWLKIHSSCPVCR) adopts an RING-type; atypical zinc-finger fold.

This sequence belongs to the RING-type zinc finger family. ATL subfamily.

Its subcellular location is the membrane. It catalyses the reaction S-ubiquitinyl-[E2 ubiquitin-conjugating enzyme]-L-cysteine + [acceptor protein]-L-lysine = [E2 ubiquitin-conjugating enzyme]-L-cysteine + N(6)-ubiquitinyl-[acceptor protein]-L-lysine.. Its pathway is protein modification; protein ubiquitination. The polypeptide is RING-H2 finger protein ATL20 (ATL20) (Arabidopsis thaliana (Mouse-ear cress)).